A 260-amino-acid chain; its full sequence is Collagenase (260 aa).

A signal peptide spans 1 to 16 (MKFLLVFALALATTSA). Residues 17–30 (FQHPASIFELREGR) constitute a propeptide that is removed on maturation. Residues 31–257 (IINGYEAYTG…YMDWIQQNTG (227 aa)) form the Peptidase S1 domain. An intrachain disulfide couples C60 to C76. Active-site charge relay system residues include H75 and D118. Cystine bridges form between C181–C196 and C206–C234. The active-site Charge relay system is S210.

This sequence belongs to the peptidase S1 family.

It is found in the secreted. It catalyses the reaction Hydrolysis of proteins including native collagen at Xaa-|-Ala bond leaving an N-terminal (75%) and a C-terminal (25%) fragment.. Its activity is regulated as follows. Inhibited by diisopropylfluorophosphate. Functionally, this enzyme is a serine protease capable of degrading the native triple helix of collagen. Also cleaves the B chain of insulin at the 15-Leu-|-Try-16 and 22-Arg-|-Gly-23 bonds. Hydrolyzes casein, but not Px-Pro-Leu-Gly-Pro-DArg, BzArgNHPh, AcTyrNHPh, 2-naphthyl phosphate, 2-naphthyl butyrate, 2-naphthyl caprylate, 2-naphthyl myristate, L-leucine 2-2-naphthylamide, L-valine 2-naphthylamide, L-cysteine 2-naphthylamide or L-glutarylphenylalanine 2-naphthylamide. This is Collagenase from Hypoderma lineatum (Early cattle grub).